Here is a 1939-residue protein sequence, read N- to C-terminus: Myosin-1 (1939 aa).

Residues 33-82 form the Myosin N-terminal SH3-like domain; it reads DAKTSVFVAEPKESFVKGTVQSREGGKVTVKTEAGATLTVKEDQVFPMNP. Residues threonine 64 and threonine 69 each carry the phosphothreonine modification. The Myosin motor domain occupies 86–782; sequence DKIEDMAMMT…LLGLLEEMRD (697 aa). At lysine 130 the chain carries N6,N6,N6-trimethyllysine. Residue 179 to 186 coordinates ATP; it reads GESGAGKT. Tyrosine 389 carries the post-translational modification Phosphotyrosine. Phosphoserine is present on serine 392. Threonine 419 is modified (phosphothreonine). Tyrosine 424 carries the phosphotyrosine modification. Serine 625 is modified (phosphoserine). Residues 659–681 form an actin-binding region; sequence LNKLMTNLRSTHPHFVRCIIPNE. The residue at position 757 (histidine 757) is a Pros-methylhistidine. Residues 761 to 775 form an actin-binding region; that stretch reads KFGHTKVFFKAGLLG. The IQ domain maps to 785–814; it reads LAQLITRTQARCRGFLARVEYQKMVERRES. The stretch at 843 to 1939 forms a coiled coil; it reads LLKSAETEKE…EVHTKIISEE (1097 aa). A phosphoserine mark is found at serine 1092 and serine 1096. 2 disordered regions span residues 1125-1147 and 1153-1172; these read EIEA…SREL and RLEE…KKRE. Positions 1128–1147 are enriched in basic and acidic residues; that stretch reads AERASRAKAEKQRSDLSREL. Phosphoserine occurs at positions 1162 and 1237. Threonine 1241 is modified (phosphothreonine). Serine 1243 carries the post-translational modification Phosphoserine. Threonine 1255 bears the Phosphothreonine mark. The residue at position 1261 (serine 1261) is a Phosphoserine. Phosphothreonine is present on residues threonine 1265 and threonine 1286. Phosphoserine occurs at positions 1288, 1292, 1303, and 1306. Tyrosine 1464 carries the post-translational modification Phosphotyrosine. A Phosphothreonine modification is found at threonine 1467. Serine 1474 is modified (phosphoserine). Tyrosine 1492 carries the phosphotyrosine modification. Serine 1495 is modified (phosphoserine). The residue at position 1501 (threonine 1501) is a Phosphothreonine. Residue serine 1514 is modified to Phosphoserine. Position 1517 is a phosphothreonine (threonine 1517). Phosphoserine occurs at positions 1554, 1574, 1600, 1603, 1714, and 1726. Threonine 1730 and threonine 1736 each carry phosphothreonine. Serine 1739 carries the post-translational modification Phosphoserine.

This sequence belongs to the TRAFAC class myosin-kinesin ATPase superfamily. Myosin family. Muscle myosin is a hexameric protein that consists of 2 heavy chain subunits (MHC), 2 alkali light chain subunits (MLC) and 2 regulatory light chain subunits (MLC-2). Interacts with SLC26A5.

It localises to the cytoplasm. The protein resides in the myofibril. In terms of biological role, required for normal hearing. It plays a role in cochlear amplification of auditory stimuli, likely through the positive regulation of prestin (SLC26A5) activity and outer hair cell (OHC) electromotility. The chain is Myosin-1 (MYH1) from Canis lupus familiaris (Dog).